Consider the following 491-residue polypeptide: Probable glycine dehydrogenase (decarboxylating) subunit 2 (491 aa).

The residue at position 264 (K264) is an N6-(pyridoxal phosphate)lysine.

The protein belongs to the GcvP family. C-terminal subunit subfamily. The glycine cleavage system is composed of four proteins: P, T, L and H. In this organism, the P 'protein' is a heterodimer of two subunits. Pyridoxal 5'-phosphate is required as a cofactor.

The enzyme catalyses N(6)-[(R)-lipoyl]-L-lysyl-[glycine-cleavage complex H protein] + glycine + H(+) = N(6)-[(R)-S(8)-aminomethyldihydrolipoyl]-L-lysyl-[glycine-cleavage complex H protein] + CO2. Its function is as follows. The glycine cleavage system catalyzes the degradation of glycine. The P protein binds the alpha-amino group of glycine through its pyridoxal phosphate cofactor; CO(2) is released and the remaining methylamine moiety is then transferred to the lipoamide cofactor of the H protein. This is Probable glycine dehydrogenase (decarboxylating) subunit 2 from Coxiella burnetii (strain CbuG_Q212) (Coxiella burnetii (strain Q212)).